A 519-amino-acid chain; its full sequence is Berghepain-1 (519 aa).

Residues 1–32 lie on the Cytoplasmic side of the membrane; that stretch reads MINDIRRINITTSSIESLNENSKYLKRNHKRT. Residues 33-53 form a helical; Signal-anchor for type II membrane protein membrane-spanning segment; the sequence is IKICAYAITTFALFFIVVVYF. Topologically, residues 54 to 519 are lumenal; sequence KNQTNVNDAN…IGIDVFFPIL (466 aa). 2 N-linked (GlcNAc...) asparagine glycosylation sites follow: asparagine 55 and asparagine 143. 4 disulfide bridges follow: cysteine 298–cysteine 340, cysteine 333–cysteine 373, cysteine 358–cysteine 378, and cysteine 427–cysteine 508. Residue cysteine 301 is part of the active site. Asparagine 432 is a glycosylation site (N-linked (GlcNAc...) asparagine). Catalysis depends on residues histidine 433 and asparagine 483.

The protein belongs to the peptidase C1 family.

It localises to the membrane. In terms of biological role, cysteine protease. Required for host hepatocyte-derived merozoite infectivity and to a lesser extent for host erythrocyte-derived merozoite infectivity. The protein is Berghepain-1 of Plasmodium berghei (strain Anka).